We begin with the raw amino-acid sequence, 155 residues long: Ribonuclease H (155 aa).

One can recognise an RNase H type-1 domain in the interval 4 to 145; it reads ETKVIEIYTD…ADALARKAIT (142 aa). Asp-13, Glu-51, Asp-73, and Asp-137 together coordinate Mg(2+).

Belongs to the RNase H family. As to quaternary structure, monomer. It depends on Mg(2+) as a cofactor.

The protein localises to the cytoplasm. It carries out the reaction Endonucleolytic cleavage to 5'-phosphomonoester.. Its function is as follows. Endonuclease that specifically degrades the RNA of RNA-DNA hybrids. The chain is Ribonuclease H from Bartonella bacilliformis (strain ATCC 35685 / KC583 / Herrer 020/F12,63).